The following is a 154-amino-acid chain: Large ribosomal subunit protein uL13 (154 aa).

It belongs to the universal ribosomal protein uL13 family. In terms of assembly, part of the 50S ribosomal subunit.

Its function is as follows. This protein is one of the early assembly proteins of the 50S ribosomal subunit, although it is not seen to bind rRNA by itself. It is important during the early stages of 50S assembly. This Brucella melitensis biotype 2 (strain ATCC 23457) protein is Large ribosomal subunit protein uL13.